The chain runs to 620 residues: Probable protein arginine N-methyltransferase 3 (620 aa).

Residues 1-17 are compositionally biased toward basic and acidic residues; the sequence is MATREHELRPEQERLGE. A disordered region spans residues 1–45; that stretch reads MATREHELRPEQERLGEDREEYEDGEEEEEEGEEGWDDWESDGDD. Over residues 18-45 the composition is skewed to acidic residues; it reads DREEYEDGEEEEEEGEEGWDDWESDGDD. A C2H2-type 1 zinc finger spans residues 55–78; it reads LLCLFCSARFDSESSLFSHCASEH. The segment at 110-137 adopts a C2H2-type 2; degenerate zinc-finger fold; sequence NKCWSCGQVFSSNSELCGHLHALEIPQL. In terms of domain architecture, SAM-dependent MTase PRMT-type spans 253–582; the sequence is DESYFGSYSS…DECPAVMIRS (330 aa). S-adenosyl-L-homocysteine is bound by residues arginine 275, glycine 299, aspartate 321, serine 323, and glutamate 364. Residues glutamate 383 and glutamate 392 contribute to the active site.

The protein belongs to the class I-like SAM-binding methyltransferase superfamily. Protein arginine N-methyltransferase family.

The protein resides in the cytoplasm. It localises to the cytosol. It carries out the reaction L-arginyl-[protein] + S-adenosyl-L-methionine = N(omega)-methyl-L-arginyl-[protein] + S-adenosyl-L-homocysteine + H(+). It catalyses the reaction L-arginyl-[protein] + 2 S-adenosyl-L-methionine = N(omega),N(omega)-dimethyl-L-arginyl-[protein] + 2 S-adenosyl-L-homocysteine + 2 H(+). Protein-arginine N-methyltransferase that catalyzes both the monomethylation and asymmetric dimethylation of the guanidino nitrogens of arginine residues in target proteins, and therefore falls into the group of type I methyltransferases. This is Probable protein arginine N-methyltransferase 3 (PRMT3) from Oryza sativa subsp. japonica (Rice).